Here is a 345-residue protein sequence, read N- to C-terminus: MNLQEKIEDLRKRTLSDLLSVADEKTLNNLRTVMLGKKGELTEILKGMKDLTNEERPVIGALANAFRDEFGAKFEAKKLEIEQAVMNAALESESLDVTLPGKAQKKGSRHILTQTQEEIEEIFLGMGYEIVDGYEVETDHYNFERMNLPKDHPARDMQDTFYITNEVLLRTHTSPMQARTMDAHDFSKGGLRMIAPGRVYRRDTDDATHSHQFHQIEGLVVDKNITMADLKGTLDLVMKKMFGQERELRWRPSYFPFTEPSVEVDISCFKCGGKGCNVCKHTGWIEILGAGMVHPNVLEMSGLDSSVYSGFAFGLGQERIAMLRYGINDIRGFYQGDVRFLEQFD.

Residue E259 coordinates Mg(2+).

It belongs to the class-II aminoacyl-tRNA synthetase family. Phe-tRNA synthetase alpha subunit type 1 subfamily. Tetramer of two alpha and two beta subunits. It depends on Mg(2+) as a cofactor.

It localises to the cytoplasm. It carries out the reaction tRNA(Phe) + L-phenylalanine + ATP = L-phenylalanyl-tRNA(Phe) + AMP + diphosphate + H(+). The polypeptide is Phenylalanine--tRNA ligase alpha subunit (Lactococcus lactis subsp. cremoris (strain SK11)).